The sequence spans 208 residues: 3-isopropylmalate dehydratase small subunit (208 aa).

It belongs to the LeuD family. LeuD type 1 subfamily. Heterodimer of LeuC and LeuD.

It catalyses the reaction (2R,3S)-3-isopropylmalate = (2S)-2-isopropylmalate. The protein operates within amino-acid biosynthesis; L-leucine biosynthesis; L-leucine from 3-methyl-2-oxobutanoate: step 2/4. Catalyzes the isomerization between 2-isopropylmalate and 3-isopropylmalate, via the formation of 2-isopropylmaleate. This chain is 3-isopropylmalate dehydratase small subunit, found in Gluconobacter oxydans (strain 621H) (Gluconobacter suboxydans).